Reading from the N-terminus, the 108-residue chain is Cytochrome c-555 (108 aa).

An N-terminal signal peptide occupies residues 1–22 (MSRFVSAALVGAALLVSGNAFA). Heme c is bound by residues Cys36, Cys39, His40, and Met82.

Post-translationally, binds 1 heme c group covalently per subunit.

Its function is as follows. This basic c-type monoheme cytochrome has been found exclusively in the green photosynthetic bacteria, although its role in bacterial photosynthesis is not established. It has an unusually low redox potential compared with mitochondrial cytochrome c. It is reactive with cytochrome c oxidases but not with reductases. The protein is Cytochrome c-555 of Chlorobaculum tepidum (strain ATCC 49652 / DSM 12025 / NBRC 103806 / TLS) (Chlorobium tepidum).